We begin with the raw amino-acid sequence, 668 residues long: Small ribosomal subunit protein mS81 (rPPR8) (668 aa).

A mitochondrion-targeting transit peptide spans 1 to 36; sequence MRYQQWRLMLLRSYHRSHLPYLSPCSQVTSISSRSF. PPR repeat units follow at residues 286–320, 321–355, 396–430, 431–465, 466–496, 502–537, and 543–577; these read DEKTYNAMARVLGKEKFLDRFQNIVVEMRSAGYEV, EIETYVRVSTRFCQTKLIKEAVDLFEIAMAGSSSS, TDSLLKSVLKSLRSVDRVEQSNELLKEMKRGGYVP, SGDMQSMIASSLSRKGKKDEADEFVDFMESSGNNL, DDKAMASLVEGYCDSGNLDEALVCFEKMVGN, ADYSFEKLVLAYCNKNQVRDAYKLLSAQVTKNQLKP, and KSLVTNLLTKKIARDGGFEEALSLLPIMKDHGFPP.

The protein belongs to the PPR family. P subfamily. As to quaternary structure, component of the mitochondrial ribosome small subunit.

The protein resides in the mitochondrion. The polypeptide is Small ribosomal subunit protein mS81 (rPPR8) (Arabidopsis thaliana (Mouse-ear cress)).